The chain runs to 247 residues: uncharacterized protein (247 aa).

The N-acetyltransferase domain maps to 102–247; that stretch reads RSIMSRTNDN…ISEHHYRIKR (146 aa).

Belongs to the acetyltransferase family.

This is an uncharacterized protein from Bacillus subtilis (strain 168).